The sequence spans 201 residues: Recombination protein RecR (201 aa).

A C4-type zinc finger spans residues 60–75 (CSTCGNVDTADPCMIC). Residues 83–178 (GTIIVVEDVS…KVTRLAHGVP (96 aa)) enclose the Toprim domain.

The protein belongs to the RecR family.

Functionally, may play a role in DNA repair. It seems to be involved in an RecBC-independent recombinational process of DNA repair. It may act with RecF and RecO. This is Recombination protein RecR from Mesorhizobium japonicum (strain LMG 29417 / CECT 9101 / MAFF 303099) (Mesorhizobium loti (strain MAFF 303099)).